Here is a 100-residue protein sequence, read N- to C-terminus: Enhancer of yellow 2 transcription factor (100 aa).

The protein belongs to the ENY2 family. In terms of assembly, component of the nuclear pore complex (NPC)-associated AMEX complex (anchoring and mRNA export complex), composed of at least e(y)2 and xmas-2. Component of the SAGA transcription coactivator-HAT complexes, at least composed of Ada2b, e(y)2, Pcaf/Gcn5, Taf10 and Nipped-A/Trrap. Within the SAGA complex, e(y)2, Sgf11, and not/nonstop form an additional subcomplex of SAGA called the DUB module (deubiquitination module). Component of the THO complex, composed of at least e(y)2, HPR1, THO2, THOC5, THOC6 and THOC7. Interacts with e(y)1. Interacts with su(Hw) (via zinc fingers). Interacts with xmas-2; required for localization to the nuclear periphery. Interacts with the nuclear pore complex (NPC).

The protein localises to the nucleus. It is found in the nucleoplasm. It localises to the cytoplasm. Involved in mRNA export coupled transcription activation by association with both the AMEX and the SAGA complexes. The SAGA complex is a multiprotein complex that activates transcription by remodeling chromatin and mediating histone acetylation and deubiquitination. Within the SAGA complex, participates in a subcomplex that specifically deubiquitinates histone H2B. The SAGA complex is recruited to specific gene promoters by activators, where it is required for transcription. Required for nuclear receptor-mediated transactivation. Involved in transcription elongation by recruiting the THO complex onto nascent mRNA. The AMEX complex functions in docking export-competent ribonucleoprotein particles (mRNPs) to the nuclear entrance of the nuclear pore complex (nuclear basket). AMEX participates in mRNA export and accurate chromatin positioning in the nucleus by tethering genes to the nuclear periphery. The protein is Enhancer of yellow 2 transcription factor of Drosophila persimilis (Fruit fly).